The primary structure comprises 600 residues: Probable pectin methyltransferase QUA3 (600 aa).

Residues 1–18 (MGHVNLPASKRGNPRQWR) are Cytoplasmic-facing. A helical; Signal-anchor for type II membrane protein membrane pass occupies residues 19–39 (LLDIVTAAFFGIVLLFFILLF). Topologically, residues 40-600 (TPLGDSMAAS…SLWKLPSNSH (561 aa)) are lumenal. The N-linked (GlcNAc...) asparagine glycan is linked to Asn-283.

Belongs to the methyltransferase superfamily. As to expression, highly expressed and abundant in suspension-cultured cells, but low levels in seedlings.

Its subcellular location is the golgi apparatus membrane. It functions in the pathway glycan metabolism; pectin biosynthesis. Its function is as follows. S-adenosyl-L-methionine (SAM)-dependent methyltransferase (MTase) which mediates the methylesterification of the pectin homogalacturonan (HG) and thus regulates cell wall biosynthesis, at least in suspension-cultured cells. This is Probable pectin methyltransferase QUA3 from Arabidopsis thaliana (Mouse-ear cress).